Reading from the N-terminus, the 154-residue chain is 6,7-dimethyl-8-ribityllumazine synthase (154 aa).

5-amino-6-(D-ribitylamino)uracil contacts are provided by residues Phe-22, 56-58 (SFE), and 81-83 (VLI). A (2S)-2-hydroxy-3-oxobutyl phosphate-binding site is contributed by 86 to 87 (ET). The Proton donor role is filled by His-89. Position 114 (Phe-114) interacts with 5-amino-6-(D-ribitylamino)uracil. A (2S)-2-hydroxy-3-oxobutyl phosphate-binding site is contributed by Arg-128.

Belongs to the DMRL synthase family.

It carries out the reaction (2S)-2-hydroxy-3-oxobutyl phosphate + 5-amino-6-(D-ribitylamino)uracil = 6,7-dimethyl-8-(1-D-ribityl)lumazine + phosphate + 2 H2O + H(+). The protein operates within cofactor biosynthesis; riboflavin biosynthesis; riboflavin from 2-hydroxy-3-oxobutyl phosphate and 5-amino-6-(D-ribitylamino)uracil: step 1/2. Functionally, catalyzes the formation of 6,7-dimethyl-8-ribityllumazine by condensation of 5-amino-6-(D-ribitylamino)uracil with 3,4-dihydroxy-2-butanone 4-phosphate. This is the penultimate step in the biosynthesis of riboflavin. This chain is 6,7-dimethyl-8-ribityllumazine synthase, found in Chlamydia caviae (strain ATCC VR-813 / DSM 19441 / 03DC25 / GPIC) (Chlamydophila caviae).